We begin with the raw amino-acid sequence, 312 residues long: Ribosomal protein L11 methyltransferase (312 aa).

Residues threonine 163, glycine 184, aspartate 206, and asparagine 248 each coordinate S-adenosyl-L-methionine.

The protein belongs to the methyltransferase superfamily. PrmA family.

It is found in the cytoplasm. The enzyme catalyses L-lysyl-[protein] + 3 S-adenosyl-L-methionine = N(6),N(6),N(6)-trimethyl-L-lysyl-[protein] + 3 S-adenosyl-L-homocysteine + 3 H(+). Functionally, methylates ribosomal protein L11. This is Ribosomal protein L11 methyltransferase from Clostridium botulinum (strain Hall / ATCC 3502 / NCTC 13319 / Type A).